Consider the following 192-residue polypeptide: Interferon (192 aa).

An N-terminal signal peptide occupies residues 1–30 (MAVPASPQHPRGYGILLLTLLMKALAAAAA). Intrachain disulfides connect Cys31–Cys128, Cys60–Cys154, and Cys67–Cys167. N-linked (GlcNAc...) asparagine glycosylation is found at Asn70 and Asn77.

Belongs to the alpha/beta interferon family.

Its subcellular location is the secreted. In terms of biological role, has antiviral activities. This Meleagris gallopavo (Wild turkey) protein is Interferon.